Reading from the N-terminus, the 173-residue chain is Crossover junction endodeoxyribonuclease RuvC (173 aa).

Residues D8, E67, and D139 contribute to the active site. The Mg(2+) site is built by D8, E67, and D139.

Belongs to the RuvC family. As to quaternary structure, homodimer which binds Holliday junction (HJ) DNA. The HJ becomes 2-fold symmetrical on binding to RuvC with unstacked arms; it has a different conformation from HJ DNA in complex with RuvA. In the full resolvosome a probable DNA-RuvA(4)-RuvB(12)-RuvC(2) complex forms which resolves the HJ. It depends on Mg(2+) as a cofactor.

Its subcellular location is the cytoplasm. It carries out the reaction Endonucleolytic cleavage at a junction such as a reciprocal single-stranded crossover between two homologous DNA duplexes (Holliday junction).. Its function is as follows. The RuvA-RuvB-RuvC complex processes Holliday junction (HJ) DNA during genetic recombination and DNA repair. Endonuclease that resolves HJ intermediates. Cleaves cruciform DNA by making single-stranded nicks across the HJ at symmetrical positions within the homologous arms, yielding a 5'-phosphate and a 3'-hydroxyl group; requires a central core of homology in the junction. The consensus cleavage sequence is 5'-(A/T)TT(C/G)-3'. Cleavage occurs on the 3'-side of the TT dinucleotide at the point of strand exchange. HJ branch migration catalyzed by RuvA-RuvB allows RuvC to scan DNA until it finds its consensus sequence, where it cleaves and resolves the cruciform DNA. This chain is Crossover junction endodeoxyribonuclease RuvC, found in Psychromonas ingrahamii (strain DSM 17664 / CCUG 51855 / 37).